Reading from the N-terminus, the 524-residue chain is MVPQVLLFVLLLGFSLCFGKFPIYTIPDELGPWSPIDIHHLSCPNNLVVEDEGCTNLSEFSYMELKVGYISAIKVNGFTCTGVVTEAETYTNFVGYVTTTFKRKHFRPTPDACRAAYNWKMAGDPRYEESLHNPYPDYHWLRTVRTTKESLIIISPSVTDLDPYDKSLHSRVFPGRKCSGITVSSTYCSTNHDYTIWMPENPRPRTPCDIFTNSRGKRASNGNKTCGFVDERGLYKSLKGACRLKLCGVLGLRLMDGTWVAMQTSGETKWCPPDQLVNLHDFRSDEIEHLVVEELVKKREECLDALESIMTTKSVSFRRLSHLRKLVPGFGKAYTIFNKTLMEADAHYKSVRTWNEIIPSKGCLKVGGRCHPHVNGVFFNGLILGPDDHVLIPEMQSSLLQQHMELLESSVIPLMHPLADPSTVFKEGDEAEDFVEVHLPDVYKQISGVDLGLPNWGKYVLMTAGAMIGLVLIFSLMTWCRRANRPESKQRSFGGTGGNVSVTSQSGKVIPSWESYKSGGEIRL.

Residues 1-19 form the signal peptide; sequence MVPQVLLFVLLLGFSLCFG. At 20 to 459 the chain is on the virion surface side; that stretch reads KFPIYTIPDE…DLGLPNWGKY (440 aa). 6 disulfides stabilise this stretch: Cys-43–Cys-302, Cys-54–Cys-226, Cys-80–Cys-113, Cys-178–Cys-188, Cys-208–Cys-247, and Cys-242–Cys-271. N-linked (GlcNAc...) asparagine; by host glycosylation occurs at Asn-56. A glycan (N-linked (GlcNAc...) asparagine; by host) is linked at Asn-223. Asn-338 carries an N-linked (GlcNAc...) asparagine; by host glycan. Cysteines 363 and 370 form a disulfide. A helical membrane pass occupies residues 460–480; the sequence is VLMTAGAMIGLVLIFSLMTWC. Residue Cys-480 is the site of S-palmitoyl cysteine; by host attachment. Topologically, residues 481 to 524 are intravirion; sequence RRANRPESKQRSFGGTGGNVSVTSQSGKVIPSWESYKSGGEIRL. The interval 487–506 is disordered; it reads ESKQRSFGGTGGNVSVTSQS.

It belongs to the lyssavirus glycoprotein family. In terms of assembly, homotrimer. Interacts with matrix protein. Interacts with host TRFC. Interacts with host BST2; this interaction inhibits viral budding by tethering new virions to the cell surface. Interacts with ITGB1. Interacts with host GRM2. Glycosylated and palmitoylated by host. Glycosylation is crucial for glycoprotein export at the cell surface.

The protein resides in the virion membrane. Its function is as follows. Attaches the virus to host cellular receptor, inducing endocytosis of the virion by using different host proteins including TFRC, GRM2 and ITGB1. In the endosome, the acidic pH induces conformational changes in the glycoprotein trimer, which trigger fusion between virus and cell membrane. There is convincing in vitro evidence that the muscular form of the nicotinic acetylcholine receptor (nAChR), the neuronal cell adhesion molecule (NCAM), and the p75 neurotrophin receptor (p75NTR) bind glycoprotein and thereby facilitate rabies virus entry into cells. This is Glycoprotein (G) from Homo sapiens (Human).